We begin with the raw amino-acid sequence, 1166 residues long: DEAD-box ATP-dependent RNA helicase 42 (1166 aa).

Basic and acidic residues-rich tracts occupy residues 1–12 (MEVEKSKYRSED) and 21–45 (DLKKSRRDRDRSNERKKDKGSEKRR). Positions 1–460 (MEVEKSKYRS…NDDDPSLDED (460 aa)) are disordered. Residues 14-95 (DVVEEEADLK…KDRVKRRSER (82 aa)) adopt a coiled-coil conformation. The segment covering 59 to 70 (SEDDYDRDDDEE) has biased composition (acidic residues). Residues 80-95 (ERRRRDKDRVKRRSER) show a composition bias toward basic residues. Residues 101–110 (SEDDVEEEDE) are compositionally biased toward acidic residues. The span at 111 to 206 (RDKRRVNEKE…RERERSREVG (96 aa)) shows a compositional bias: basic and acidic residues. Residues 130 to 302 (RGKDRKRDRE…KRKKEEAESE (173 aa)) are a coiled coil. Serine 210 bears the Phosphoserine mark. The segment covering 224-314 (EGGERKEKER…GDADGNEPKA (91 aa)) has biased composition (basic and acidic residues). Serine 324 carries the post-translational modification Phosphoserine. Basic and acidic residues-rich tracts occupy residues 344 to 357 (ETKPENDGDAKMVD) and 416 to 426 (MNGKESGDRPK). A Q motif motif is present at residues 529–557 (KFWHQTGLTSKILDTMKKLNYEKPMPIQT). The Helicase ATP-binding domain maps to 560 to 738 (LPIIMSGRDC…RKVLNKPVEI (179 aa)). 573 to 580 (AKTGSGKT) lines the ATP pocket. The short motif at 686–689 (DEAD) is the DEAD box element. The 162-residue stretch at 749–910 (DITQLVEVRP…PVPDDLKALA (162 aa)) folds into the Helicase C-terminal domain.

It belongs to the DEAD box helicase family. DDX46/PRP5 subfamily.

Its subcellular location is the nucleus. It carries out the reaction ATP + H2O = ADP + phosphate + H(+). In terms of biological role, helicase required for pre-mRNA splicing, cold-responsive gene regulation and cold tolerance. This is DEAD-box ATP-dependent RNA helicase 42 (RH42) from Arabidopsis thaliana (Mouse-ear cress).